Consider the following 498-residue polypeptide: Oligopeptide transport system permease protein AmiC (498 aa).

Transmembrane regions (helical) follow at residues 12-32, 279-299, 316-336, 359-379, 415-435, and 461-481; these read SLVSIFLVTTLTYTIIYTLVP, MIVSSAITGLIGLVLAYALAV, LSTGALTFLLALPTIALVYIV, SYVLPAVILGLLGAPGTAIWI, MVPLVSGIPAAIIGVIGGATL, and VVGLVFIFTCISIFSRLLGDI. Residues 280 to 479 enclose the ABC transmembrane type-1 domain; that stretch reads IVSSAITGLI…CISIFSRLLG (200 aa).

The protein belongs to the binding-protein-dependent transport system permease family. OppBC subfamily.

The protein localises to the cell membrane. Functionally, part of the binding-protein-dependent transport system for oligopeptides; probably responsible for the translocation of the substrate across the membrane. This chain is Oligopeptide transport system permease protein AmiC (amiC), found in Streptococcus pneumoniae serotype 4 (strain ATCC BAA-334 / TIGR4).